The sequence spans 107 residues: Large ribosomal subunit protein eL33A (107 aa).

Position 2 is an N-acetylalanine; partial (A2). Residue K47 forms a Glycyl lysine isopeptide (Lys-Gly) (interchain with G-Cter in ubiquitin) linkage.

The protein belongs to the eukaryotic ribosomal protein eL33 family. Component of the large ribosomal subunit (LSU). Mature yeast ribosomes consist of a small (40S) and a large (60S) subunit. The 40S small subunit contains 1 molecule of ribosomal RNA (18S rRNA) and 33 different proteins (encoded by 57 genes). The large 60S subunit contains 3 rRNA molecules (25S, 5.8S and 5S rRNA) and 46 different proteins (encoded by 81 genes). Post-translationally, N-terminally acetylated by acetyltransferase NatA.

Its subcellular location is the cytoplasm. Functionally, component of the ribosome, a large ribonucleoprotein complex responsible for the synthesis of proteins in the cell. The small ribosomal subunit (SSU) binds messenger RNAs (mRNAs) and translates the encoded message by selecting cognate aminoacyl-transfer RNA (tRNA) molecules. The large subunit (LSU) contains the ribosomal catalytic site termed the peptidyl transferase center (PTC), which catalyzes the formation of peptide bonds, thereby polymerizing the amino acids delivered by tRNAs into a polypeptide chain. The nascent polypeptides leave the ribosome through a tunnel in the LSU and interact with protein factors that function in enzymatic processing, targeting, and the membrane insertion of nascent chains at the exit of the ribosomal tunnel. The polypeptide is Large ribosomal subunit protein eL33A (Saccharomyces cerevisiae (strain ATCC 204508 / S288c) (Baker's yeast)).